Reading from the N-terminus, the 469-residue chain is Glutamate--tRNA ligase (469 aa).

The 'HIGH' region signature appears at 11–21; sequence PSPTGFIHLGN. A 'KMSKS' region motif is present at residues 243–247; it reads KMSKR. ATP is bound at residue Lys246.

It belongs to the class-I aminoacyl-tRNA synthetase family. Glutamate--tRNA ligase type 1 subfamily. As to quaternary structure, monomer.

Its subcellular location is the cytoplasm. The catalysed reaction is tRNA(Glu) + L-glutamate + ATP = L-glutamyl-tRNA(Glu) + AMP + diphosphate. Its function is as follows. Catalyzes the attachment of glutamate to tRNA(Glu) in a two-step reaction: glutamate is first activated by ATP to form Glu-AMP and then transferred to the acceptor end of tRNA(Glu). The polypeptide is Glutamate--tRNA ligase (Burkholderia ambifaria (strain MC40-6)).